Consider the following 344-residue polypeptide: N-acetyl-gamma-glutamyl-phosphate reductase (344 aa).

Cysteine 150 is an active-site residue.

Belongs to the NAGSA dehydrogenase family. Type 1 subfamily.

It localises to the cytoplasm. The catalysed reaction is N-acetyl-L-glutamate 5-semialdehyde + phosphate + NADP(+) = N-acetyl-L-glutamyl 5-phosphate + NADPH + H(+). It functions in the pathway amino-acid biosynthesis; L-arginine biosynthesis; N(2)-acetyl-L-ornithine from L-glutamate: step 3/4. Functionally, catalyzes the NADPH-dependent reduction of N-acetyl-5-glutamyl phosphate to yield N-acetyl-L-glutamate 5-semialdehyde. The sequence is that of N-acetyl-gamma-glutamyl-phosphate reductase from Azotobacter vinelandii (strain DJ / ATCC BAA-1303).